Here is a 300-residue protein sequence, read N- to C-terminus: N-acetylmuramic acid 6-phosphate etherase (300 aa).

An SIS domain is found at 57-220; sequence IAVAFQSGGR…TTGAMIRTGK (164 aa). Catalysis depends on glutamate 85, which acts as the Proton donor. The active site involves glutamate 116.

This sequence belongs to the GCKR-like family. MurNAc-6-P etherase subfamily. In terms of assembly, homodimer.

The enzyme catalyses N-acetyl-D-muramate 6-phosphate + H2O = N-acetyl-D-glucosamine 6-phosphate + (R)-lactate. The protein operates within amino-sugar metabolism; 1,6-anhydro-N-acetylmuramate degradation. It participates in amino-sugar metabolism; N-acetylmuramate degradation. Its pathway is cell wall biogenesis; peptidoglycan recycling. Specifically catalyzes the cleavage of the D-lactyl ether substituent of MurNAc 6-phosphate, producing GlcNAc 6-phosphate and D-lactate. Together with AnmK, is also required for the utilization of anhydro-N-acetylmuramic acid (anhMurNAc) either imported from the medium or derived from its own cell wall murein, and thus plays a role in cell wall recycling. The sequence is that of N-acetylmuramic acid 6-phosphate etherase from Aliivibrio fischeri (strain MJ11) (Vibrio fischeri).